The chain runs to 156 residues: MTDADELAAVAARTFPLACPPAVAPEHIASFVDANLSSARFAEYLTDPRRAILTARHDGRIVGYAMLIRGDDRDVELSKLYLLPGYHGTGAAAALMHKVLATAADWGALRVWLGVNQKNQRAQRFYAKTGFKINGTRTFRLGAHHENDYVMVRELV.

Positions 10–156 (VAARTFPLAC…NDYVMVRELV (147 aa)) constitute an N-acetyltransferase domain.

This sequence belongs to the acetyltransferase family.

This is an uncharacterized protein from Mycobacterium bovis (strain ATCC BAA-935 / AF2122/97).